A 261-amino-acid chain; its full sequence is 5'-nucleotidase SurE (261 aa).

A divalent metal cation-binding residues include D8, D9, S43, and N96.

The protein belongs to the SurE nucleotidase family. Requires a divalent metal cation as cofactor.

It localises to the cytoplasm. It carries out the reaction a ribonucleoside 5'-phosphate + H2O = a ribonucleoside + phosphate. In terms of biological role, nucleotidase that shows phosphatase activity on nucleoside 5'-monophosphates. In Dinoroseobacter shibae (strain DSM 16493 / NCIMB 14021 / DFL 12), this protein is 5'-nucleotidase SurE.